The sequence spans 282 residues: Lipoyl synthase (282 aa).

7 residues coordinate [4Fe-4S] cluster: Cys-37, Cys-42, Cys-48, Cys-63, Cys-67, Cys-70, and Ser-274. In terms of domain architecture, Radical SAM core spans Trp-49–Ser-263.

It belongs to the radical SAM superfamily. Lipoyl synthase family. The cofactor is [4Fe-4S] cluster.

It is found in the cytoplasm. It catalyses the reaction [[Fe-S] cluster scaffold protein carrying a second [4Fe-4S](2+) cluster] + N(6)-octanoyl-L-lysyl-[protein] + 2 oxidized [2Fe-2S]-[ferredoxin] + 2 S-adenosyl-L-methionine + 4 H(+) = [[Fe-S] cluster scaffold protein] + N(6)-[(R)-dihydrolipoyl]-L-lysyl-[protein] + 4 Fe(3+) + 2 hydrogen sulfide + 2 5'-deoxyadenosine + 2 L-methionine + 2 reduced [2Fe-2S]-[ferredoxin]. The protein operates within protein modification; protein lipoylation via endogenous pathway; protein N(6)-(lipoyl)lysine from octanoyl-[acyl-carrier-protein]: step 2/2. Functionally, catalyzes the radical-mediated insertion of two sulfur atoms into the C-6 and C-8 positions of the octanoyl moiety bound to the lipoyl domains of lipoate-dependent enzymes, thereby converting the octanoylated domains into lipoylated derivatives. The polypeptide is Lipoyl synthase (Bacteroides thetaiotaomicron (strain ATCC 29148 / DSM 2079 / JCM 5827 / CCUG 10774 / NCTC 10582 / VPI-5482 / E50)).